A 262-amino-acid polypeptide reads, in one-letter code: Putative non-heme bromoperoxidase BpoC (262 aa).

Residues Arg21, 87–88 (SM), and Arg120 contribute to the substrate site. Ser87 is a catalytic residue. Active-site residues include Asp211 and His239. His239 is a binding site for substrate.

It belongs to the AB hydrolase superfamily. As to quaternary structure, homodimer.

In Mycobacterium tuberculosis (strain CDC 1551 / Oshkosh), this protein is Putative non-heme bromoperoxidase BpoC (bpoC).